Here is a 494-residue protein sequence, read N- to C-terminus: Transcription factor SOX-9 (494 aa).

Disordered regions lie at residues M1–E66 and E159–V275. Over residues S27–D42 the composition is skewed to low complexity. Composition is skewed to basic and acidic residues over residues G56 to E66 and E159 to Y174. Residues E63–P103 are dimerization (DIM). The PQA stretch occupies residues E63–P103. S64 is subject to Phosphoserine. Positions V105–K173 form a DNA-binding region, HMG box. At S181 the chain carries Phosphoserine. A compositionally biased stretch (low complexity) spans S211–H222. Residues P224 to P309 form a transactivation domain (TAM) region. 2 consecutive short sequence motifs (9aaTAD) follow at residues I277–S286 and D292–L300. Low complexity predominate over residues S326 to A337. Positions S326–Q402 are disordered. A compositionally biased stretch (pro residues) spans P344–P353. The tract at residues R372–P494 is transactivation domain (TAC). A Glycyl lysine isopeptide (Lys-Gly) (interchain with G-Cter in SUMO) cross-link involves residue K376. The segment covering E378–E387 has biased composition (polar residues). Residues Q388–Q402 show a composition bias toward low complexity. The short motif at G445 to Y453 is the 9aaTAD 3 element. The tract at residues Y462–P494 is disordered. A compositionally biased stretch (polar residues) spans G470–P494.

In terms of assembly, interacts with SNAI2; triggers neural crest delamination in a phosphorylation dependent manner. Interacts with UBE2I. In terms of processing, phosphorylated at Ser-181 in the developing neural tube. Phosphorylation at either Ser-64 or Ser-181 is required for sumoylation, but phosphorylation is not dependent on sumoylation. Sumoylation is enhanced by PKA. Phosphorylation is required for interaction with SNAI2 to trigger neural crest delamination and for an efficient trunk neural crest delamination, whereas sumoylation plays a less significant role. Phosphorylation and sumoylation are induced by BMP signaling pathway. Post-translationally, sumoylated at Lys-376; phosphorylation at either Ser-64 or Ser-181 is required for sumoylation. Sumoylation is induced by BMP signaling pathway.

The protein resides in the nucleus. Transcription factor that plays a key role in chondrocytes differentiation and skeletal development. Specifically binds the 5'-ACAAAG-3' DNA motif present in enhancers and super-enhancers and promotes expression of genes important for chondrogenesis, including COL2A1. Plays a central role in successive steps of chondrocyte differentiation. Absolutely required for precartilaginous condensation, the first step in chondrogenesis during which skeletal progenitors differentiate into prechondrocytes. Together with SOX5 and SOX6, required for overt chondrogenesis when condensed prechondrocytes differentiate into early stage chondrocytes, the second step in chondrogenesis. Later, required to direct hypertrophic maturation and block osteoblast differentiation of growth plate chondrocytes: maintains chondrocyte columnar proliferation, delays prehypertrophy and then prevents osteoblastic differentiation of chondrocytes. Also required for chondrocyte hypertrophy, both indirectly, by keeping the lineage fate of chondrocytes, and directly, by remaining present in upper hypertrophic cells. Low lipid levels are the main nutritional determinant for chondrogenic commitment of skeletal progenitor cells: when lipids levels are low, FOXO transcription factors promote expression of SOX9, which induces chondrogenic commitment and suppresses fatty acid oxidation. In addition to cartilage development, also acts as a regulator of proliferation and differentiation in epithelial stem/progenitor cells. In response to bone morphogenetic protein stimulus, phosphorylation is induced and then sumoylation, allowing cooperation with SNAI2 to trigger neural crest delamination. This chain is Transcription factor SOX-9, found in Gallus gallus (Chicken).